The sequence spans 427 residues: Adenylosuccinate synthetase (427 aa).

Residues 12–18 and 40–42 contribute to the GTP site; these read GDEGKGK and GHT. Catalysis depends on D13, which acts as the Proton acceptor. Mg(2+) contacts are provided by D13 and G40. IMP-binding positions include 13–16, 38–41, T130, R144, Q224, T239, and R303; these read DEGK and NAGH. H41 acts as the Proton donor in catalysis. 299–305 serves as a coordination point for substrate; that stretch reads VTTGRAR. Residues R305, 331 to 333, and 413 to 415 each bind GTP; these read KID and SVG.

Belongs to the adenylosuccinate synthetase family. In terms of assembly, homodimer. Mg(2+) serves as cofactor.

Its subcellular location is the cytoplasm. It catalyses the reaction IMP + L-aspartate + GTP = N(6)-(1,2-dicarboxyethyl)-AMP + GDP + phosphate + 2 H(+). Its pathway is purine metabolism; AMP biosynthesis via de novo pathway; AMP from IMP: step 1/2. Functionally, plays an important role in the de novo pathway of purine nucleotide biosynthesis. Catalyzes the first committed step in the biosynthesis of AMP from IMP. This is Adenylosuccinate synthetase from Clostridium novyi (strain NT).